We begin with the raw amino-acid sequence, 88 residues long: Small ribosomal subunit protein bS16c (88 aa).

In terms of assembly, component of the chloroplast small ribosomal subunit (SSU). Mature 70S chloroplast ribosomes of higher plants consist of a small (30S) and a large (50S) subunit. The 30S small subunit contains 1 molecule of ribosomal RNA (16S rRNA) and 24 different proteins. The 50S large subunit contains 3 rRNA molecules (23S, 5S and 4.5S rRNA) and 33 different proteins.

The protein resides in the plastid. It is found in the chloroplast. Functionally, component of the chloroplast ribosome (chloro-ribosome), a dedicated translation machinery responsible for the synthesis of chloroplast genome-encoded proteins, including proteins of the transcription and translation machinery and components of the photosynthetic apparatus. In Spinacia oleracea (Spinach), this protein is Small ribosomal subunit protein bS16c.